A 341-amino-acid chain; its full sequence is GTP-binding protein GTR2 (341 aa).

Residues S23, S24, S43, H124, and D127 each contribute to the GTP site.

Belongs to the GTR/RAG GTP-binding protein family. As to quaternary structure, heterodimer; with GTR1. Component of the GSE complex composed of GTR1, GTR2, SLM4, MEH1 and LTV1. Component of the EGO complex, at least composed of GTR2, SLM4 and MEH1. Interacts with GTR1; the interaction is direct.

It localises to the vacuole membrane. It carries out the reaction GTP + H2O = GDP + phosphate + H(+). In terms of biological role, GTPase involved in activation of the TORC1 signaling pathway, which promotes growth and represses autophagy in nutrient-rich conditions. Also required for TORC1 inactivation during nitrogen starvation. Required for intracellular sorting of GAP1 out of the endosome. Involved in the regulation of microautophagy. The chain is GTP-binding protein GTR2 from Saccharomyces cerevisiae (strain ATCC 204508 / S288c) (Baker's yeast).